The sequence spans 3169 residues: FRAS1-related extracellular matrix protein 2 (3169 aa).

The disordered stretch occupies residues 1-24; sequence MHSAGTPGLSSRRTGNSTSFQPGP. The signal sequence occupies residues 1-46; that stretch reads MHSAGTPGLSSRRTGNSTSFQPGPPPPPRLLLLLLLLLSLVSRVPA. Over residues 8–21 the composition is skewed to polar residues; that stretch reads GLSSRRTGNSTSFQ. The Extracellular portion of the chain corresponds to 47-3113; the sequence is QPAAFGRALL…SPSSAVSLVT (3067 aa). 12 CSPG repeats span residues 319-413, 438-537, 560-675, 700-807, 828-919, 945-1037, 1066-1168, 1189-1282, 1303-1399, 1420-1512, 1532-1621, and 1655-1752; these read KPSF…LELE, APVV…LRMV, PPVL…FRVQ, PPEL…FQVE, QPPE…LEVS, HPTG…LSLS, APEI…FRCS, EQPE…IKLT, TPRM…FDVT, VFPD…FQVT, KKPV…FTVT, and VPQI…FAVE. A glycan (N-linked (GlcNAc...) asparagine) is linked at N358. N1244 and N1369 each carry an N-linked (GlcNAc...) asparagine glycan. N-linked (GlcNAc...) asparagine glycosylation is found at N1584 and N1741. Calx-beta domains are found at residues 1759–1858, 1871–1982, 1997–2103, 2118–2220, and 2238–2342; these read LTYQ…VVLS, ATVE…VLLS, QVTI…LVLR, VSIN…LVLG, and TLIR…VHLK. The interval 3036–3057 is disordered; that stretch reads SLVSQGKPQSTTKSRKKREIRS. Residues 3037–3047 are compositionally biased toward polar residues; that stretch reads LVSQGKPQSTT. The helical transmembrane segment at 3114–3134 threads the bilayer; the sequence is VVGGTTVGLLTICLTVIAVLM. The Cytoplasmic segment spans residues 3135–3169; the sequence is CRGKESFRGKDAPKGSSSSEPMVPPQSHHNDSSEV. Residues 3141-3169 form a disordered region; it reads FRGKDAPKGSSSSEPMVPPQSHHNDSSEV.

This sequence belongs to the FRAS1 family. As to quaternary structure, interacts with FREM1.

The protein localises to the cell membrane. In terms of biological role, extracellular matrix protein required for maintenance of the integrity of the skin epithelium and for maintenance of renal epithelia. Required for epidermal adhesion. Involved in the development of eyelids and the anterior segment of the eyeballs. The polypeptide is FRAS1-related extracellular matrix protein 2 (FREM2) (Homo sapiens (Human)).